The following is a 389-amino-acid chain: MTLAAHTTEDYEELLGRVFDDQVKAWTAEAEASERFPRQLIEHLGRTGVFTQKWGDGQQPDVAKLIALALELGRLGSAGIGVGVSLHDSAIALLRRFAKNDYLRTICEQAIRGEAVLCIGASEISGGSDLQIVGTEVRSVRDGYEVRGVKKFVSLSPIADHIMVVARNVDHDPGSRHGNVVVIAVPTSQVEAQAPYRKVGAGPLDTAAVHIDTWVPGDALIARPGTGLAAISWGLAHERLSIAGQVAGASQRVIGITLARMMKRRQFGHTLYEHQALRMRMADLQARVDMLRYALAGIAAGGRLDLRAAAAIKVTAARLGEEVLSECMHIFGGSGYLTDETPLGRWWRDMKLARVGGGTDEVLWELVAAAMRPDYDGYDELIDSPTGDD.

Belongs to the acyl-CoA dehydrogenase family. The cofactor is FAD.

The protein operates within siderophore biosynthesis; mycobactin biosynthesis. Functionally, catalyzes the dehydrogenation at the alpha-beta position of ACP-bound acyl chains. This results in the introduction of a double bond in the lipidic chain, which is further transferred to the epsilon-amino group of lysine residue in the mycobactin core by MbtK. This chain is Acyl-[acyl-carrier-protein] dehydrogenase MbtN (mbtN), found in Mycobacterium sp. (strain MCS).